A 260-amino-acid polypeptide reads, in one-letter code: WUSCHEL-related homeobox 2 (260 aa).

The homeobox; WUS-type DNA-binding region spans 10 to 74 (ASSSRWNPTK…NHKARQRQKQ (65 aa)).

The protein belongs to the WUS homeobox family.

The protein resides in the nucleus. In terms of biological role, probable transcription factor involved in embryonic patterning. Required for apical embryo development after fertilization. Its specific localization to the apical daughter cell of the zygote, while WOX8 is confined to the basal cell, suggests that the asymmetric division of the plant zygote separates determinants of apical and basal cell fates. This Arabidopsis thaliana (Mouse-ear cress) protein is WUSCHEL-related homeobox 2 (WOX2).